Consider the following 123-residue polypeptide: Large ribosomal subunit protein uL18 (123 aa).

Belongs to the universal ribosomal protein uL18 family. In terms of assembly, part of the 50S ribosomal subunit; part of the 5S rRNA/L5/L18/L25 subcomplex. Contacts the 5S and 23S rRNAs.

This is one of the proteins that bind and probably mediate the attachment of the 5S RNA into the large ribosomal subunit, where it forms part of the central protuberance. The protein is Large ribosomal subunit protein uL18 of Protochlamydia amoebophila (strain UWE25).